The primary structure comprises 321 residues: Lipoyl synthase (321 aa).

Residues Cys68, Cys73, Cys79, Cys94, Cys98, Cys101, and Ser308 each contribute to the [4Fe-4S] cluster site. The 218-residue stretch at 80–297 folds into the Radical SAM core domain; it reads FNHGTATFMI…KVIAEDLGFS (218 aa).

This sequence belongs to the radical SAM superfamily. Lipoyl synthase family. [4Fe-4S] cluster is required as a cofactor.

It is found in the cytoplasm. The enzyme catalyses [[Fe-S] cluster scaffold protein carrying a second [4Fe-4S](2+) cluster] + N(6)-octanoyl-L-lysyl-[protein] + 2 oxidized [2Fe-2S]-[ferredoxin] + 2 S-adenosyl-L-methionine + 4 H(+) = [[Fe-S] cluster scaffold protein] + N(6)-[(R)-dihydrolipoyl]-L-lysyl-[protein] + 4 Fe(3+) + 2 hydrogen sulfide + 2 5'-deoxyadenosine + 2 L-methionine + 2 reduced [2Fe-2S]-[ferredoxin]. Its pathway is protein modification; protein lipoylation via endogenous pathway; protein N(6)-(lipoyl)lysine from octanoyl-[acyl-carrier-protein]: step 2/2. Functionally, catalyzes the radical-mediated insertion of two sulfur atoms into the C-6 and C-8 positions of the octanoyl moiety bound to the lipoyl domains of lipoate-dependent enzymes, thereby converting the octanoylated domains into lipoylated derivatives. This Shewanella amazonensis (strain ATCC BAA-1098 / SB2B) protein is Lipoyl synthase.